The chain runs to 611 residues: ATP-dependent zinc metalloprotease FtsH (611 aa).

Residue Met-1 is a topological domain, cytoplasmic. Residues 2–22 (VKNLIFWLVITVVLMSIFQNF) form a helical membrane-spanning segment. Topologically, residues 23-98 (NTNDVNNHKV…IGAIPEEPSL (76 aa)) are extracellular. A helical transmembrane segment spans residues 99-119 (FISILISWFPMLLLIGVWIFF). The Cytoplasmic portion of the chain corresponds to 120 to 611 (MRQMQMGGGK…KGWIETDTNK (492 aa)). 192–199 (GPPGTGKT) is a binding site for ATP. His-414 is a binding site for Zn(2+). Glu-415 is an active-site residue. Positions 418 and 492 each coordinate Zn(2+).

This sequence in the central section; belongs to the AAA ATPase family. It in the C-terminal section; belongs to the peptidase M41 family. As to quaternary structure, homohexamer. Requires Zn(2+) as cofactor.

Its subcellular location is the cell membrane. Functionally, acts as a processive, ATP-dependent zinc metallopeptidase for both cytoplasmic and membrane proteins. Plays a role in the quality control of integral membrane proteins. In Buchnera aphidicola subsp. Acyrthosiphon pisum (strain APS) (Acyrthosiphon pisum symbiotic bacterium), this protein is ATP-dependent zinc metalloprotease FtsH.